Consider the following 349-residue polypeptide: Hydroxymethylglutaryl-CoA synthase (349 aa).

Asp-29 contributes to the (3S)-3-hydroxy-3-methylglutaryl-CoA binding site. Glu-81 serves as the catalytic Proton donor/acceptor. (3S)-3-hydroxy-3-methylglutaryl-CoA contacts are provided by Cys-113, Ser-154, Thr-202, and His-235. The active-site Acyl-thioester intermediate is Cys-113. Residue His-235 is the Proton donor/acceptor of the active site. Residue Arg-240 participates in CoA binding. (3S)-3-hydroxy-3-methylglutaryl-CoA contacts are provided by Arg-244, Asn-267, and Ser-297.

The protein belongs to the thiolase-like superfamily. Archaeal HMG-CoA synthase family. As to quaternary structure, interacts with acetoacetyl-CoA thiolase that catalyzes the precedent step in the pathway and with a DUF35 protein. The acetoacetyl-CoA thiolase/HMG-CoA synthase complex channels the intermediate via a fused CoA-binding site, which allows for efficient coupling of the endergonic thiolase reaction with the exergonic HMGCS reaction.

The enzyme catalyses acetoacetyl-CoA + acetyl-CoA + H2O = (3S)-3-hydroxy-3-methylglutaryl-CoA + CoA + H(+). Its pathway is metabolic intermediate biosynthesis; (R)-mevalonate biosynthesis; (R)-mevalonate from acetyl-CoA: step 2/3. In terms of biological role, catalyzes the condensation of acetyl-CoA with acetoacetyl-CoA to form 3-hydroxy-3-methylglutaryl-CoA (HMG-CoA). Functions in the mevalonate (MVA) pathway leading to isopentenyl diphosphate (IPP), a key precursor for the biosynthesis of isoprenoid compounds that are building blocks of archaeal membrane lipids. This Pyrobaculum arsenaticum (strain DSM 13514 / JCM 11321 / PZ6) protein is Hydroxymethylglutaryl-CoA synthase.